The primary structure comprises 441 residues: uncharacterized protein (441 aa).

A compositionally biased stretch (low complexity) spans 121–143 (TLSPSIVSEQQQQQQQQQQQQQQ). Disordered stretches follow at residues 121 to 146 (TLSP…QAIS) and 371 to 392 (SDAD…TAPN). The segment covering 382–391 (PTSAPSTTAP) has biased composition (polar residues).

This is an uncharacterized protein from Dictyostelium discoideum (Social amoeba).